The chain runs to 377 residues: UPF0754 membrane protein LMOf2365_2257 (377 aa).

A run of 2 helical transmembrane segments spans residues 1–21 and 357–377; these read MSVL…GAMT and YLGG…AMWI.

Belongs to the UPF0754 family.

The protein resides in the cell membrane. The chain is UPF0754 membrane protein LMOf2365_2257 from Listeria monocytogenes serotype 4b (strain F2365).